An 88-amino-acid polypeptide reads, in one-letter code: Small ribosomal subunit protein bS20 (88 aa).

This sequence belongs to the bacterial ribosomal protein bS20 family.

Binds directly to 16S ribosomal RNA. This chain is Small ribosomal subunit protein bS20, found in Clostridium botulinum (strain 657 / Type Ba4).